A 236-amino-acid polypeptide reads, in one-letter code: Small ribosomal subunit protein uS3 (236 aa).

The region spanning 39 to 107 (VRQFLTKELK…PAQINISEVR (69 aa)) is the KH type-2 domain.

The protein belongs to the universal ribosomal protein uS3 family. Part of the 30S ribosomal subunit. Forms a tight complex with proteins S10 and S14.

Binds the lower part of the 30S subunit head. Binds mRNA in the 70S ribosome, positioning it for translation. This Aeromonas salmonicida (strain A449) protein is Small ribosomal subunit protein uS3.